The sequence spans 250 residues: Cobalt transport protein CbiM (250 aa).

The signal sequence occupies residues 1–25 (MKQNIKLGVIAALMLIVLTPVTSNA). The next 6 helical transmembrane spans lie at 33–53 (LPVK…LVGL), 68–88 (VLLA…IPSV), 100–120 (LGAI…VLIF), 132–152 (TLGA…FLIF), 163–183 (AMPV…VTSI), and 205–225 (GIFF…TVIV).

Belongs to the CbiM family. In terms of assembly, forms an energy-coupling factor (ECF) transporter complex composed of an ATP-binding protein (A component, CbiO), a transmembrane protein (T component, CbiQ) and 2 possible substrate-capture proteins (S components, CbiM and CbiN) of unknown stoichimetry.

The protein resides in the cell membrane. It participates in cofactor biosynthesis; adenosylcobalamin biosynthesis. Functionally, part of the energy-coupling factor (ECF) transporter complex CbiMNOQ involved in cobalt import. The polypeptide is Cobalt transport protein CbiM (Clostridioides difficile (strain R20291) (Peptoclostridium difficile)).